The chain runs to 540 residues: uncharacterized protein (540 aa).

Residues 1 to 58 (MAVSAFRGTRLPLFHHSQFPVARTVSGTSKKMIGARNFKGFVLTAQYSQTQDLFTSRL) constitute a chloroplast transit peptide. The region spanning 195-533 (YVDPTPIASA…ISIASNKRTN (339 aa)) is the Protein kinase domain. Residues 201–209 (IASASIAQV) and K224 each bind ATP. D362 serves as the catalytic Proton acceptor.

This sequence belongs to the protein kinase superfamily. ADCK protein kinase family.

It localises to the plastid. Its subcellular location is the chloroplast. The protein resides in the plastoglobule. This is an uncharacterized protein from Arabidopsis thaliana (Mouse-ear cress).